Consider the following 44-residue polypeptide: Photosystem I reaction center subunit IX (44 aa).

A helical membrane pass occupies residues 7 to 27 (YLSVAPVLSTLWFGSLAGLLI).

It belongs to the PsaJ family.

Its subcellular location is the plastid. The protein resides in the chloroplast thylakoid membrane. In terms of biological role, may help in the organization of the PsaE and PsaF subunits. The sequence is that of Photosystem I reaction center subunit IX from Lactuca sativa (Garden lettuce).